Reading from the N-terminus, the 104-residue chain is Ig kappa chain b5 variant C region (104 aa).

Residues 5–100 (PTVLIFPPSP…SGSPVVQSFS (96 aa)) enclose the Ig-like domain. A disulfide bridge links Cys26 with Cys85.

The polypeptide is Ig kappa chain b5 variant C region (Oryctolagus cuniculus (Rabbit)).